The sequence spans 83 residues: NAD(P)H-quinone oxidoreductase subunit L (83 aa).

2 helical membrane passes run 18–38 and 53–73; these read ILAY…ALFF and LLVY…APFL.

Belongs to the complex I NdhL subunit family. In terms of assembly, NDH-1 can be composed of about 15 different subunits; different subcomplexes with different compositions have been identified which probably have different functions.

Its subcellular location is the cellular thylakoid membrane. The catalysed reaction is a plastoquinone + NADH + (n+1) H(+)(in) = a plastoquinol + NAD(+) + n H(+)(out). The enzyme catalyses a plastoquinone + NADPH + (n+1) H(+)(in) = a plastoquinol + NADP(+) + n H(+)(out). Its function is as follows. NDH-1 shuttles electrons from an unknown electron donor, via FMN and iron-sulfur (Fe-S) centers, to quinones in the respiratory and/or the photosynthetic chain. The immediate electron acceptor for the enzyme in this species is believed to be plastoquinone. Couples the redox reaction to proton translocation, and thus conserves the redox energy in a proton gradient. Cyanobacterial NDH-1 also plays a role in inorganic carbon-concentration. The sequence is that of NAD(P)H-quinone oxidoreductase subunit L from Parasynechococcus marenigrum (strain WH8102).